Reading from the N-terminus, the 602-residue chain is UvrABC system protein C (602 aa).

In terms of domain architecture, GIY-YIG spans 17–94; that stretch reads KTSGCYKMYS…IKKYKPTYNI (78 aa). One can recognise a UVR domain in the interval 199–234; the sequence is SKLLNDIEIKMKEVIMKENFEAAIKLKETKKSLIEI.

This sequence belongs to the UvrC family. As to quaternary structure, interacts with UvrB in an incision complex.

It localises to the cytoplasm. In terms of biological role, the UvrABC repair system catalyzes the recognition and processing of DNA lesions. UvrC both incises the 5' and 3' sides of the lesion. The N-terminal half is responsible for the 3' incision and the C-terminal half is responsible for the 5' incision. This Borrelia duttonii (strain Ly) protein is UvrABC system protein C.